Reading from the N-terminus, the 458-residue chain is Protein adenylyltransferase FICD (458 aa).

Topologically, residues 1–23 (MMLIPMASVMAVTEPKWVSVWSR) are cytoplasmic. Residues 24–44 (FLWVTLLSMVLGSLLALLLPL) form a helical; Signal-anchor for type II membrane protein membrane-spanning segment. Over 45-458 (GAVEEQCLAV…GFKETLPVKP (414 aa)) the chain is Lumenal. Ser79 bears the O-AMP-serine; by autocatalysis mark. O-AMP-threonine; by autocatalysis is present on Thr80. 2 TPR repeats span residues 106-139 (ARAALNQALEMKRQGKREKAQKLFMHALKMDPDF) and 140-173 (VDALTEFGIFSEEDKDIIQADYLYTRALTISPYH). Thr183 is subject to O-AMP-threonine; by autocatalysis. The Inhibitory (S/T)XXXE(G/N) motif motif lies at 230–235 (TVAIEG). Glu234 is an ATP binding site. A glycan (N-linked (GlcNAc...) asparagine) is linked at Asn275. The 136-residue stretch at 285–420 (VTISDVLEIH…VRPFIRFIAK (136 aa)) folds into the Fido domain. ATP is bound at residue 316-319 (VGHH). His363 is an active-site residue. ATP contacts are provided by residues 367 to 374 (DGNGRTSR), 399 to 400 (YY), and Asn407. N-linked (GlcNAc...) asparagine glycosylation occurs at Asn446.

This sequence belongs to the fic family. In terms of assembly, homodimer. Interacts with HD. The cofactor is Mg(2+). Mn(2+) is required as a cofactor. Post-translationally, auto-AMPylated in vitro; it is unclear whether auto-AMPylation is relevant in vivo. N-glycosylated; predominantly glycosylated at Asn-275. As to expression, ubiquitous.

The protein localises to the endoplasmic reticulum membrane. It carries out the reaction L-tyrosyl-[protein] + ATP = O-(5'-adenylyl)-L-tyrosyl-[protein] + diphosphate. The enzyme catalyses 3-O-(5'-adenylyl)-L-threonyl-[protein] + H2O = L-threonyl-[protein] + AMP + H(+). It catalyses the reaction L-threonyl-[protein] + ATP = 3-O-(5'-adenylyl)-L-threonyl-[protein] + diphosphate. The side chain of Glu-234 determines which of the two opposing activities (AMPylase or de-AMPylase) will take place. In response to endoplasmic reticulum stress, mediates de-AMPylase activity. Adenylyltransferase activity is inhibited by the inhibitory helix present at the N-terminus: Glu-234 binds ATP and competes with ATP-binding at Arg-374, thereby preventing adenylyltransferase activity. In unstressed cells, disengagement of Glu-234 promotes adenylyltransferase activity. Activation dissociates ATP-binding from Glu-234, allowing ordered binding of the entire ATP moiety with the alpha-phosphate in an orientation that is productive for accepting an incoming target hydroxyl side chain. Its function is as follows. Protein that can both mediate the addition of adenosine 5'-monophosphate (AMP) to specific residues of target proteins (AMPylation), and the removal of the same modification from target proteins (de-AMPylation), depending on the context. The side chain of Glu-231 determines which of the two opposing activities (AMPylase or de-AMPylase) will take place. Acts as a key regulator of the ERN1/IRE1-mediated unfolded protein response (UPR) by mediating AMPylation or de-AMPylation of HSPA5/BiP. In unstressed cells, acts as an adenylyltransferase by mediating AMPylation of HSPA5/BiP at 'Thr-518', thereby inactivating it. In response to endoplasmic reticulum stress, acts as a phosphodiesterase by mediating removal of ATP (de-AMPylation) from HSPA5/BiP at 'Thr-518', leading to restore HSPA5/BiP activity. Although it is able to AMPylate RhoA, Rac and Cdc42 Rho GTPases in vitro, Rho GTPases do not constitute physiological substrates. This is Protein adenylyltransferase FICD from Homo sapiens (Human).